Consider the following 429-residue polypeptide: Protein phosphatase 2C homolog 2 (429 aa).

Residues 16–291 enclose the PPM-type phosphatase domain; sequence LYGLSAMQGW…DNMTMIIIGL (276 aa). Residues Asp64, Gly65, Asp233, and Asp282 each coordinate Mn(2+). Disordered regions lie at residues 320–348 and 384–429; these read YGKSEFRGPGIRNQFEETPDNYDLENDRS and RDVT…SASS. The span at 384-397 shows a compositional bias: basic and acidic residues; that stretch reads RDVTNHLQHDKAEE. Positions 405-419 are enriched in low complexity; that stretch reads SESPSSANKNSSGSG.

The protein belongs to the PP2C family. It depends on Mg(2+) as a cofactor. The cofactor is Mn(2+).

The protein resides in the cytoplasm. The protein localises to the nucleus. The enzyme catalyses O-phospho-L-seryl-[protein] + H2O = L-seryl-[protein] + phosphate. The catalysed reaction is O-phospho-L-threonyl-[protein] + H2O = L-threonyl-[protein] + phosphate. In terms of biological role, dephosphorylating regulator for many key proteins. Dephosphorylates sakA, to negatively regulate the stress-activated p38MAPK cascade. This chain is Protein phosphatase 2C homolog 2, found in Aspergillus fumigatus (strain ATCC MYA-4609 / CBS 101355 / FGSC A1100 / Af293) (Neosartorya fumigata).